The following is a 90-amino-acid chain: Protein AF1q (90 aa).

The Nuclear export signal signature appears at 24-32 (LSELEGLGL). Ser84 carries the phosphoserine modification.

Belongs to the MLLT11 family. As to quaternary structure, interacts with HSPA8 and LAMP2 isoform A; the interaction may target MLLT11 for degradation via chaperone-mediated autophagy. Interacts with TCF7. Ubiquitinated, leading to degradation.

Its subcellular location is the nucleus. It is found in the cytoplasm. It localises to the cytoskeleton. The protein localises to the microtubule organizing center. The protein resides in the centrosome. Cofactor for the transcription factor TCF7. Involved in regulation of lymphoid development by driving multipotent hematopoietic progenitor cells towards a T-cell fate. This Pongo abelii (Sumatran orangutan) protein is Protein AF1q (MLLT11).